Consider the following 710-residue polypeptide: Nucleolin (710 aa).

Positions 1-303 are disordered; the sequence is MVKLAKAGKN…KKQKVEGTEP (303 aa). An N6-acetyllysine mark is found at lysine 9, lysine 15, and lysine 16. A compositionally biased stretch (acidic residues) spans 24–43; the sequence is VEEDSEDEEMSEDEEDDSSG. Phosphoserine occurs at positions 28, 34, 41, and 42. Positions 56-107 are enriched in low complexity; sequence AAATSAKKVVVSPTKKVAVATPAKKAAVTPGKKAAATPAKKTVTPAKAVTTP. Repeat 1 spans residues 58–65; sequence ATSAKKVV. Residues 58–135 form an 8 X 8 AA tandem repeats of X-T-P-X-K-K-X-X region; sequence ATSAKKVVVS…GAAIPAKGAK (78 aa). The residue at position 67 (serine 67) is a Phosphoserine. A phosphothreonine mark is found at threonine 69, threonine 76, threonine 84, and threonine 92. Repeat copies occupy residues 75–82, 83–90, and 91–98. Lysine 96 is subject to N6-acetyllysine. The residue at position 99 (threonine 99) is a Phosphothreonine. The stretch at 99–104 is one 5; truncated repeat; the sequence is TPAKAV. An N6-acetyllysine modification is found at lysine 102. Residues 105 to 112 form repeat 6; it reads TTPGKKGA. Residue threonine 106 is modified to Phosphothreonine. Residue lysine 109 is modified to N6-acetyllysine. At threonine 113 the chain carries Phosphothreonine. At lysine 116 the chain carries N6-acetyllysine. A run of 2 repeats spans residues 120–127 and 128–135. Residue threonine 121 is modified to Phosphothreonine. Over residues 122-137 the composition is skewed to low complexity; it reads PGKKGAAIPAKGAKNG. Lysine 124 bears the N6-acetyllysine mark. 2 positions are modified to phosphoserine: serine 145 and serine 153. A compositionally biased stretch (acidic residues) spans 145 to 171; it reads SDEEEDDDSEEDEEDDEDEDEDEDEIE. Residues 172–183 are compositionally biased toward low complexity; it reads PAAMKAAAAAPA. Phosphoserine occurs at positions 184 and 206. Residues 184 to 211 are compositionally biased toward acidic residues; that stretch reads SEDEDDEDDEDDEDDDDDEEDDSEEEAM. Threonine 214 carries the post-translational modification Phosphothreonine. Positions 234–272 are enriched in acidic residues; sequence EDEDEEEDDEDEDDDDDEDDEDDDDEDDEEEEEEEEEEP. Residues 273–300 show a composition bias toward basic and acidic residues; that stretch reads VKEAPGKRKKEMAKQKAAPEAKKQKVEG. A Glycyl lysine isopeptide (Lys-Gly) (interchain with G-Cter in SUMO1); alternate cross-link involves residue lysine 297. Lysine 297 is covalently cross-linked (Glycyl lysine isopeptide (Lys-Gly) (interchain with G-Cter in SUMO2); alternate). A Phosphothreonine modification is found at threonine 301. 2 RRM domains span residues 307–383 and 393–466; these read FNLF…KPKG and RTLL…YTGE. Lysine 318 is modified (N6-acetyllysine). Lysine 324 is covalently cross-linked (Glycyl lysine isopeptide (Lys-Gly) (interchain with G-Cter in SUMO1); alternate). Residue lysine 324 forms a Glycyl lysine isopeptide (Lys-Gly) (interchain with G-Cter in SUMO2); alternate linkage. Lysine 348 carries the post-translational modification N6-acetyllysine. A Phosphoserine modification is found at serine 356. Threonine 367 is subject to Phosphothreonine. A Glycyl lysine isopeptide (Lys-Gly) (interchain with G-Cter in SUMO2) cross-link involves residue lysine 370. A Glycyl lysine isopeptide (Lys-Gly) (interchain with G-Cter in SUMO2); alternate cross-link involves residue lysine 377. At lysine 377 the chain carries N6-acetyllysine; alternate. N6-acetyllysine occurs at positions 398 and 403. The residue at position 405 (threonine 405) is a Phosphothreonine. Residues lysine 427 and lysine 444 each carry the N6-acetyllysine modification. Phosphoserine is present on residues serine 458 and serine 460. N6-acetyllysine is present on residues lysine 467 and lysine 477. One can recognise an RRM 3 domain in the interval 486-560; the sequence is KTLVLSNLSY…RAIRLELQGP (75 aa). Lysine 513 participates in a covalent cross-link: Glycyl lysine isopeptide (Lys-Gly) (interchain with G-Cter in SUMO2); alternate. Lysine 513 carries the N6-acetyllysine; alternate modification. Lysine 521 carries the N6-acetyllysine modification. Serine 563 bears the Phosphoserine mark. The residue at position 572 (lysine 572) is an N6-acetyllysine. In terms of domain architecture, RRM 4 spans 572-647; sequence KTLFVKGLSE…NKVTLDWAKP (76 aa). A Glycyl lysine isopeptide (Lys-Gly) (interchain with G-Cter in SUMO2); alternate cross-link involves residue lysine 577. Position 577 is an N6-acetyllysine; alternate (lysine 577). Serine 580 carries the phosphoserine modification. Lysine 589 participates in a covalent cross-link: Glycyl lysine isopeptide (Lys-Gly) (interchain with G-Cter in SUMO1); alternate. Residue lysine 589 forms a Glycyl lysine isopeptide (Lys-Gly) (interchain with G-Cter in SUMO2); alternate linkage. A phosphoserine mark is found at serine 591 and serine 619. Lysine 624 participates in a covalent cross-link: Glycyl lysine isopeptide (Lys-Gly) (interchain with G-Cter in SUMO2). Residues 640-710 form a disordered region; it reads VTLDWAKPKG…KPQGKKTKFE (71 aa). Lysine 646 is subject to N6-acetyllysine. Gly residues predominate over residues 650–696; it reads EGGFGGRGGGRGGFGGRGGGRGGRGGFGGRGRGGFGGRGGFRGGRGG. Asymmetric dimethylarginine occurs at positions 656, 660, 666, 670, 673, 679, 681, 687, and 691. Residue arginine 694 is modified to Asymmetric dimethylarginine; alternate. An Omega-N-methylarginine; alternate modification is found at arginine 694. The segment covering 697–710 has biased composition (basic and acidic residues); that stretch reads GGDHKPQGKKTKFE.

As to quaternary structure, identified in a IGF2BP1-dependent mRNP granule complex containing untranslated mRNAs. Component of the SWAP complex that consists of NPM1, NCL/nucleolin, PARP1 and SWAP70. Component of a complex which is at least composed of HTATSF1/Tat-SF1, the P-TEFb complex components CDK9 and CCNT1, RNA polymerase II, SUPT5H, and NCL/nucleolin. Interacts with AICDA. Interacts with APTX. Interacts with C1QBP. Interacts with ERBB4. Interacts (via C-terminus) with FMR1 isoform 6 (via N-terminus). Interacts with GZF1; this interaction is important for nucleolar localization of GZF1. Interacts with NSUN2. Interacts with NVL. Interacts (via N-terminus domain) with SETX. Interacts (via RRM1 and C-terminal RRM4/Arg/Gly-rich domains) with TERT; the interaction is important for nucleolar localization of TERT. Interacts with WDR46. Interacts with ZFP36. Interacts with LRRC34. Interacts with RRP1B. Interacts with HNRNPU; this interaction occurs during mitosis. Interacts with RIOK1; RIOK1 recruits NCL to PRMT5 for symmetrically methylation. Interacts with ZBTB7B. Interacts with MDK; this interaction promotes NCL clustering and lateral movements of this complex into lipid rafts leading to MDK internalization. Interacts with HDGF (isoform 1). Interacts with ALKBH2. Interacts with IGFBP5; this interaction is necessary for IGFBP5 localization to the nucleus. Interacts with DDX24 (when ubiquitinated); this interaction may be important during ribosome biogenesis. Post-translationally, some glutamate residues are glycylated by TTLL8. This modification occurs exclusively on glutamate residues and results in a glycine chain on the gamma-carboxyl group. In terms of processing, symmetrically methylated by PRMT5.

It localises to the nucleus. The protein localises to the nucleolus. The protein resides in the cytoplasm. Functionally, nucleolin is the major nucleolar protein of growing eukaryotic cells. It is found associated with intranucleolar chromatin and pre-ribosomal particles. It induces chromatin decondensation by binding to histone H1. It is thought to play a role in pre-rRNA transcription and ribosome assembly. May play a role in the process of transcriptional elongation. Binds RNA oligonucleotides with 5'-UUAGGG-3' repeats more tightly than the telomeric single-stranded DNA 5'-TTAGGG-3' repeats. This chain is Nucleolin (NCL), found in Homo sapiens (Human).